Here is a 500-residue protein sequence, read N- to C-terminus: Mannan polymerase II complex ANP1 subunit (500 aa).

Over 1–15 (MKYNNRKLSFNPTTV) the chain is Cytoplasmic. A helical; Signal-anchor for type II membrane protein transmembrane segment spans residues 16–27 (SIAGTLLTVFFL). Residues 28–500 (TRLVLSFFSI…VPLDFDPDRN (473 aa)) lie on the Lumenal side of the membrane. The disordered stretch occupies residues 424–500 (WSEEGDGSEL…VPLDFDPDRN (77 aa)). Over residues 446-467 (QQQQQQQQQQQQQQQQQQQQQQ) the composition is skewed to low complexity. Over residues 489–500 (KEVPLDFDPDRN) the composition is skewed to basic and acidic residues.

The protein belongs to the ANP1/MMN9/VAN1 family. In terms of assembly, component of the M-Pol II complex composed of ANP1, MNN9, MNN10, MNN11 and HOC1.

The protein resides in the endoplasmic reticulum membrane. The protein localises to the golgi apparatus membrane. In terms of biological role, involved in the organization of the secretory pathway. Required to maintain a functional Golgi apparatus. Its function is as follows. The M-Pol II complex possesses alpha-1,6-mannosyltransferase activity and is probably involved in the elongation of the mannan backbone of N-linked glycans on cell wall and periplasmic proteins. The sequence is that of Mannan polymerase II complex ANP1 subunit (ANP1) from Saccharomyces cerevisiae (strain ATCC 204508 / S288c) (Baker's yeast).